The following is a 182-amino-acid chain: ATP-dependent protease subunit HslV (182 aa).

Residue T12 is part of the active site. 3 residues coordinate Na(+): G167, C170, and T173.

Belongs to the peptidase T1B family. HslV subfamily. As to quaternary structure, a double ring-shaped homohexamer of HslV is capped on each side by a ring-shaped HslU homohexamer. The assembly of the HslU/HslV complex is dependent on binding of ATP.

The protein resides in the cytoplasm. The enzyme catalyses ATP-dependent cleavage of peptide bonds with broad specificity.. Allosterically activated by HslU binding. Protease subunit of a proteasome-like degradation complex believed to be a general protein degrading machinery. The protein is ATP-dependent protease subunit HslV of Acidiphilium cryptum (strain JF-5).